Consider the following 360-residue polypeptide: MSDIDQLNSSLLAEIAATNDEPALEAVRVAALGKKGSISELLKTLGAMTPEERQTRGAAINALKNAVTDAIAERKSVLKMAAVNARLKAETVDVSLPVRSSPAERGRIHPISQIVDEITAIFADMGFSIAEGPDIETDYYNFTALNFPEGHPAREMHDTFFFNPDENGERKVLRTHTSPVQVRTMEAQKPPIRIIIPGKTYRQDSDATHSPMFHQVEGLVIDKKANVANIRWVLEEFCKTFFEVDSVTMRFRPSFFPFTEPSFEVDIQCDRSGPIVKFGEGTDWMEILGCGMVHPNVLRYGGLDPDEYQGFAWGMGLDRIAMLKYGMPDLRDFFNADVRWMTHYGFRPLDMPTLFGGLSA.

Residue Glu260 participates in Mg(2+) binding.

This sequence belongs to the class-II aminoacyl-tRNA synthetase family. Phe-tRNA synthetase alpha subunit type 1 subfamily. In terms of assembly, tetramer of two alpha and two beta subunits. Requires Mg(2+) as cofactor.

It is found in the cytoplasm. The catalysed reaction is tRNA(Phe) + L-phenylalanine + ATP = L-phenylalanyl-tRNA(Phe) + AMP + diphosphate + H(+). This chain is Phenylalanine--tRNA ligase alpha subunit, found in Rhizobium etli (strain CIAT 652).